The following is a 161-amino-acid chain: Ribosome maturation factor RimP (161 aa).

The protein belongs to the RimP family.

It is found in the cytoplasm. Functionally, required for maturation of 30S ribosomal subunits. The polypeptide is Ribosome maturation factor RimP (Rickettsia massiliae (strain Mtu5)).